A 369-amino-acid chain; its full sequence is MKSGRFIGVMSGTSLDGVDVVLATIDEHRVAQLASLSWPIPVSLKQAVLDICQGQQLTLSQFGQLDTQLGRLFADAVNALLKEQNLQARDIVAIGCHGQTVWHEPTGVAPHTLQIGDNNQIVARTGITVVGDFRRRDIALGGQGAPLVPAFHHALLAHPTERRMVLNIGGIANLSLLIPGQPVGGYDTGPGNMLMDAWIWRQAGKPYDKDAEWARAGKVILPLLQNMLCDPYFSQPAPKSTGREYFNYGWLERHLRHFPGVDPRDVQATLAELTAVTISEQVLLSGGCERLMVCGGGSRNPLLMARLAALLPGTEVTTTDAVGISGDDMEALAFAWLAWRTLAGLPGNLPSVTGASQETVLGAIFPANP.

Residue 12 to 19 (GTSLDGVD) coordinates ATP.

Belongs to the anhydro-N-acetylmuramic acid kinase family.

It catalyses the reaction 1,6-anhydro-N-acetyl-beta-muramate + ATP + H2O = N-acetyl-D-muramate 6-phosphate + ADP + H(+). It participates in amino-sugar metabolism; 1,6-anhydro-N-acetylmuramate degradation. Its pathway is cell wall biogenesis; peptidoglycan recycling. Its function is as follows. Catalyzes the specific phosphorylation of 1,6-anhydro-N-acetylmuramic acid (anhMurNAc) with the simultaneous cleavage of the 1,6-anhydro ring, generating MurNAc-6-P. Is required for the utilization of anhMurNAc either imported from the medium or derived from its own cell wall murein, and thus plays a role in cell wall recycling. This chain is Anhydro-N-acetylmuramic acid kinase, found in Escherichia coli O81 (strain ED1a).